The sequence spans 797 residues: RAS guanyl-releasing protein 1 (797 aa).

Residues 1 to 12 are compositionally biased toward basic and acidic residues; that stretch reads MGTLGKAREAPR. The interval 1–23 is disordered; the sequence is MGTLGKAREAPRKPSHGCRAASK. The N-terminal Ras-GEF domain maps to 53–176; sequence LGHLAKGASL…RLIDTTQINA (124 aa). A ras exchanger motif region; required for transforming activity region spans residues 57–110; the sequence is AKGASLDDLIDSCIQSFDADGNLCRSNQLLQVMLTMHRIVISSAELLQKVITLY. Threonine 184 bears the Phosphothreonine; by PKC mark. The Ras-GEF domain maps to 205-436; the sequence is EPEELSEHLT…YELSYAREPR (232 aa). 2 EF-hand domains span residues 470–505 and 506–532; these read HVQR…FPFS and FCVM…ASSI. Ca(2+)-binding residues include aspartate 483, aspartate 485, aspartate 487, tyrosine 489, and glutamate 494. The Phorbol-ester/DAG-type zinc-finger motif lies at 541–591; it reads PHNFQETTYLKPTFCDNCAGFLWGVIKQGYRCKDCGMNCHKQCKDLVVFEC. The segment at 673–694 is disordered; that stretch reads TQTESQPWIGSEGPSGPFVLSS. Residues 686 to 694 form a suppress the PT region-mediated translocation to plasma membrane region; it reads PSGPFVLSS. Residues 718-797 form a PT region; mediates the BCR-dependent translocation to plasma membrane region; it reads LVRKRAFVKW…LAQMEQGDCS (80 aa). The stretch at 746-786 forms a coiled coil; the sequence is PTYQELEQEINTLKADNDALKIQLKYAQKKIESLQLEKSNH.

This sequence belongs to the RASGRP family. In terms of assembly, homodimer. Forms a signaling complex with DGKZ and HRAS. Interacts with F-actin. Interacts with SKAP1. In terms of tissue distribution, expressed in brain with higher expression in cerebellum, cerebral cortex and amygdala. Expressed in the hematopoietic system. Expressed in T-cells (at protein level). Expressed in NK cells (at protein level).

The protein resides in the cytoplasm. It is found in the cytosol. The protein localises to the cell membrane. It localises to the golgi apparatus membrane. Its subcellular location is the endoplasmic reticulum membrane. With respect to regulation, autoinhibited. Activated by diacylglycerol and calcium binding, which induces a conformational change releasing the autoinhibitory state. Regulated by DGKA. Regulated by DGKZ. Regulated by PLC gamma and F-actin polymerization. In terms of biological role, functions as a calcium- and diacylglycerol (DAG)-regulated nucleotide exchange factor specifically activating Ras through the exchange of bound GDP for GTP. Activates the Erk/MAP kinase cascade. Regulates T-cell/B-cell development, homeostasis and differentiation by coupling T-lymphocyte/B-lymphocyte antigen receptors to Ras. Regulates NK cell cytotoxicity and ITAM-dependent cytokine production by activation of Ras-mediated ERK and JNK pathways. Functions in mast cell degranulation and cytokine secretion, regulating FcERI-evoked allergic responses. May also function in differentiation of other cell types. In Homo sapiens (Human), this protein is RAS guanyl-releasing protein 1 (RASGRP1).